Consider the following 627-residue polypeptide: uncharacterized protein (627 aa).

Residues 1 to 20 (MAKFKKDLTTKNKDTDRLSE) are compositionally biased toward basic and acidic residues. 2 disordered regions span residues 1 to 22 (MAKFKKDLTTKNKDTDRLSEEI) and 578 to 606 (LSLGSEEEQGQEETEASIQNAGDKKLLPV). The span at 582-592 (SEEEQGQEETE) shows a compositional bias: acidic residues.

This is an uncharacterized protein from Rickettsia prowazekii (strain Madrid E).